We begin with the raw amino-acid sequence, 418 residues long: Transcription termination factor Rho (418 aa).

The Rho RNA-BD domain maps to 48-123; the sequence is DIYGDGVLEI…LKVNDINFDR (76 aa). ATP contacts are provided by residues 169–174, 181–186, and R212; these read GKGQRG and KAGKTM.

Belongs to the Rho family. As to quaternary structure, homohexamer. The homohexamer assembles into an open ring structure.

In terms of biological role, facilitates transcription termination by a mechanism that involves Rho binding to the nascent RNA, activation of Rho's RNA-dependent ATPase activity, and release of the mRNA from the DNA template. The protein is Transcription termination factor Rho of Allochromatium vinosum (strain ATCC 17899 / DSM 180 / NBRC 103801 / NCIMB 10441 / D) (Chromatium vinosum).